Consider the following 557-residue polypeptide: Dihydroxy-acid dehydratase (557 aa).

A Mg(2+)-binding site is contributed by Asp-78. [2Fe-2S] cluster is bound at residue Cys-119. Residues Asp-120 and Lys-121 each coordinate Mg(2+). The residue at position 121 (Lys-121) is an N6-carboxylysine. Cys-192 is a binding site for [2Fe-2S] cluster. Residue Glu-442 coordinates Mg(2+). The active-site Proton acceptor is Ser-468.

This sequence belongs to the IlvD/Edd family. As to quaternary structure, homodimer. The cofactor is [2Fe-2S] cluster. Requires Mg(2+) as cofactor.

It catalyses the reaction (2R)-2,3-dihydroxy-3-methylbutanoate = 3-methyl-2-oxobutanoate + H2O. The enzyme catalyses (2R,3R)-2,3-dihydroxy-3-methylpentanoate = (S)-3-methyl-2-oxopentanoate + H2O. The protein operates within amino-acid biosynthesis; L-isoleucine biosynthesis; L-isoleucine from 2-oxobutanoate: step 3/4. Its pathway is amino-acid biosynthesis; L-valine biosynthesis; L-valine from pyruvate: step 3/4. Its function is as follows. Functions in the biosynthesis of branched-chain amino acids. Catalyzes the dehydration of (2R,3R)-2,3-dihydroxy-3-methylpentanoate (2,3-dihydroxy-3-methylvalerate) into 2-oxo-3-methylpentanoate (2-oxo-3-methylvalerate) and of (2R)-2,3-dihydroxy-3-methylbutanoate (2,3-dihydroxyisovalerate) into 2-oxo-3-methylbutanoate (2-oxoisovalerate), the penultimate precursor to L-isoleucine and L-valine, respectively. The chain is Dihydroxy-acid dehydratase from Bacillus anthracis (strain A0248).